Consider the following 347-residue polypeptide: D-alanine--D-alanine ligase (347 aa).

An ATP-grasp domain is found at 134–332 (KLYAKDLGVK…LAQSLPKTPK (199 aa)). 161–216 (LIGFNFPFIIKPSNAGSSLGVSVVKEEKELIYALDGAFEYSKEILIEPFIQGVKEY) is an ATP binding site. Mg(2+)-binding residues include D288, E300, and N302.

Belongs to the D-alanine--D-alanine ligase family. It depends on Mg(2+) as a cofactor. Mn(2+) serves as cofactor.

The protein localises to the cytoplasm. It carries out the reaction 2 D-alanine + ATP = D-alanyl-D-alanine + ADP + phosphate + H(+). The protein operates within cell wall biogenesis; peptidoglycan biosynthesis. Functionally, cell wall formation. This Helicobacter pylori (strain Shi470) protein is D-alanine--D-alanine ligase.